Here is a 353-residue protein sequence, read N- to C-terminus: Photosystem II protein D1 (353 aa).

The residue at position 2 (T2) is an N-acetylthreonine. T2 bears the Phosphothreonine mark. 3 helical membrane-spanning segments follow: residues 29 to 46 (YIGW…TATS), 118 to 133 (HFLL…EWEL), and 142 to 156 (WIAV…AATA). Residue H118 coordinates chlorophyll a. Y126 lines the pheophytin a pocket. 2 residues coordinate [CaMn4O5] cluster: D170 and E189. Residues 197-218 (FHMLGVAGVFGGSLFSAMHGSL) traverse the membrane as a helical segment. H198 contacts chlorophyll a. A quinone contacts are provided by residues H215 and 264–265 (SF). A Fe cation-binding site is contributed by H215. Position 272 (H272) interacts with Fe cation. A helical transmembrane segment spans residues 274–288 (FLAAWPVVGIWFTAL). Residues H332, E333, D342, and A344 each coordinate [CaMn4O5] cluster. Residues 345–353 (SIEAPLVNG) constitute a propeptide that is removed on maturation.

Belongs to the reaction center PufL/M/PsbA/D family. In terms of assembly, PSII is composed of 1 copy each of membrane proteins PsbA, PsbB, PsbC, PsbD, PsbE, PsbF, PsbH, PsbI, PsbJ, PsbK, PsbL, PsbM, PsbT, PsbX, PsbY, PsbZ, Psb30/Ycf12, at least 3 peripheral proteins of the oxygen-evolving complex and a large number of cofactors. It forms dimeric complexes. The cofactor is The D1/D2 heterodimer binds P680, chlorophylls that are the primary electron donor of PSII, and subsequent electron acceptors. It shares a non-heme iron and each subunit binds pheophytin, quinone, additional chlorophylls, carotenoids and lipids. D1 provides most of the ligands for the Mn4-Ca-O5 cluster of the oxygen-evolving complex (OEC). There is also a Cl(-1) ion associated with D1 and D2, which is required for oxygen evolution. The PSII complex binds additional chlorophylls, carotenoids and specific lipids.. Post-translationally, tyr-161 forms a radical intermediate that is referred to as redox-active TyrZ, YZ or Y-Z. In terms of processing, C-terminally processed by CTPA; processing is essential to allow assembly of the oxygen-evolving complex and thus photosynthetic growth.

The protein localises to the plastid. Its subcellular location is the chloroplast thylakoid membrane. It carries out the reaction 2 a plastoquinone + 4 hnu + 2 H2O = 2 a plastoquinol + O2. In terms of biological role, photosystem II (PSII) is a light-driven water:plastoquinone oxidoreductase that uses light energy to abstract electrons from H(2)O, generating O(2) and a proton gradient subsequently used for ATP formation. It consists of a core antenna complex that captures photons, and an electron transfer chain that converts photonic excitation into a charge separation. The D1/D2 (PsbA/PsbD) reaction center heterodimer binds P680, the primary electron donor of PSII as well as several subsequent electron acceptors. This is Photosystem II protein D1 from Psilotum nudum (Whisk fern).